A 141-amino-acid chain; its full sequence is uncharacterized protein (141 aa).

5 consecutive transmembrane segments (helical) span residues 7-27, 34-54, 69-89, 97-117, and 121-141; these read FWALLSAAFAALTAVFAKVGV, FATLIRTVVILCVIAAIVAAT, LFLALSGLATGASWLAYFRAL, VAPLDKLSIVMVAIFGVLFLG, and NLMNWLGVAFIAAGALLLAVF. The 127-residue stretch at 14–140 folds into the EamA domain; that stretch reads AFAALTAVFA…IAAGALLLAV (127 aa).

The protein belongs to the EamA transporter family.

The protein resides in the cell membrane. This is an uncharacterized protein from Sinorhizobium sp.